Here is a 467-residue protein sequence, read N- to C-terminus: Metal transporter cnnm-4 (467 aa).

Over 1–110 the chain is Extracellular; that stretch reads MELYAAGRYD…EIPEGKDKTR (110 aa). N-linked (GlcNAc...) asparagine glycosylation is present at asparagine 61. Residues 107 to 293 form the CNNM transmembrane domain; the sequence is DKTRVYFMMP…LEDEEAADGN (187 aa). Residues 111–131 traverse the membrane as a helical segment; sequence VYFMMPLLVLCLGLSATFSGL. Over 132–170 the chain is Cytoplasmic; it reads NLAIMSFSINDLKLIQESDSDKLMKQRAMDVMRLRRNSN. Residues 171-191 form a helical membrane-spanning segment; that stretch reads FVLVTIIFGNCFCNISITLLM. At 192–196 the chain is on the extracellular side; that stretch reads NYFAE. Residues 197–217 traverse the membrane as a helical segment; that stretch reads FYGFGGFIFVELISTALLLIF. Residues 218 to 238 are Cytoplasmic-facing; that stretch reads TEILPSLIFTKNALAIASRLQ. Residues 239–259 form a helical membrane-spanning segment; that stretch reads YFVIFTMCITSPISYPLAMLL. Residues 260–467 lie on the Extracellular side of the membrane; the sequence is NIILGKENAD…IFDEKDARQE (208 aa). CBS domains are found at residues 317–381 and 394–461; these read MTEI…GSDT and KRRK…IFDE. An N-linked (GlcNAc...) asparagine glycan is attached at asparagine 364.

The protein belongs to the ACDP family.

Its subcellular location is the cell membrane. In terms of biological role, probable metal transporter. Probably acts redundantly with the other metal transport proteins cnnm-1, cnnm-2, cnnm-3 and cnnm-5 to regulate Mg(2+) homeostasis. In Caenorhabditis elegans, this protein is Metal transporter cnnm-4.